The sequence spans 275 residues: Erythroagglutinating phytohemagglutinin (275 aa).

The N-terminal stretch at 1 to 21 is a signal peptide; it reads MASSNLLSLALFLVLLTHANS. N-linked (GlcNAc...) (high mannose) asparagine glycosylation occurs at Asn-33. Residues Asn-81 and Asn-101 are each glycosylated (N-linked (GlcNAc...) asparagine).

This sequence belongs to the leguminous lectin family.

Its function is as follows. This insecticidal carbohydrate-binding lectin is toxic for the cowpea weevil. This chain is Erythroagglutinating phytohemagglutinin (DLEC1), found in Phaseolus vulgaris (Kidney bean).